We begin with the raw amino-acid sequence, 330 residues long: Membrane progestin receptor gamma (330 aa).

The Cytoplasmic segment spans residues 1-51 (MLSLKLPRLFRIDQVPQVFHEQGILFGYRHPQSSATACILSLFQMTNETLN). The helical transmembrane segment at 52 to 72 (IWTHLLPFWFFVWRFMTALYV) threads the bilayer. At 73 to 81 (TDIQNDSYS) the chain is on the extracellular side. A helical transmembrane segment spans residues 82-101 (WPMLVYMCTSCVYPLASSCA). The Cytoplasmic segment spans residues 102–113 (HTFSSMSKNARH). The helical transmembrane segment at 114–134 (ICYFLDYGAVNLFSLGSAIAY) threads the bilayer. Topologically, residues 135–141 (SAYTFPD) are extracellular. The chain crosses the membrane as a helical span at residues 142 to 162 (ALVCSTFHECYVALAVLNTIL). Over 163-186 (STGLSCYSRFLELQKPRLCKLLRV) the chain is Cytoplasmic. A helical membrane pass occupies residues 187–207 (LAFAYPYTWDSLPIFYRLFLF). Over 208–253 (PGESSRNEAMLYHQKHMGMTLLASFFYSAHLPERLAPGRFDYIGHS) the chain is Extracellular. Residues 254–274 (HQLFHVCVILATHLQMEAILL) form a helical membrane-spanning segment. Residues 275 to 294 (DKTLRREWLLATSRPFSFPQ) lie on the Cytoplasmic side of the membrane. A helical transmembrane segment spans residues 295–315 (IAAAMLLCIIFSLSNIIYFSA). Residues 316-330 (ALYRIPEPELHEKET) lie on the Extracellular side of the membrane.

This sequence belongs to the ADIPOR family.

It is found in the cell membrane. Functionally, plasma membrane progesterone (P4) receptor coupled to G proteins. Seems to act through a G(i) mediated pathway. May be involved in oocyte maturation. This is Membrane progestin receptor gamma from Mus musculus (Mouse).